Consider the following 229-residue polypeptide: Potassium/proton antiporter CemA (229 aa).

Transmembrane regions (helical) follow at residues 7 to 27 (FTPL…SLSL), 114 to 134 (IICF…LLIL), 154 to 174 (ILLL…ELMI), and 189 to 209 (IISG…KYWI).

This sequence belongs to the CemA family.

It is found in the plastid. The protein localises to the chloroplast inner membrane. It catalyses the reaction K(+)(in) + H(+)(out) = K(+)(out) + H(+)(in). Its function is as follows. Contributes to K(+)/H(+) antiport activity by supporting proton efflux to control proton extrusion and homeostasis in chloroplasts in a light-dependent manner to modulate photosynthesis. Prevents excessive induction of non-photochemical quenching (NPQ) under continuous-light conditions. Indirectly promotes efficient inorganic carbon uptake into chloroplasts. The sequence is that of Potassium/proton antiporter CemA from Vitis vinifera (Grape).